We begin with the raw amino-acid sequence, 209 residues long: 2-phospho-L-lactate guanylyltransferase (209 aa).

Belongs to the CofC family. As to quaternary structure, homodimer.

It carries out the reaction (2S)-2-phospholactate + GTP + H(+) = (2S)-lactyl-2-diphospho-5'-guanosine + diphosphate. The protein operates within cofactor biosynthesis; coenzyme F420 biosynthesis. Functionally, guanylyltransferase that catalyzes the activation of (2S)-2-phospholactate (2-PL) as (2S)-lactyl-2-diphospho-5'-guanosine, via the condensation of 2-PL with GTP. It is involved in the biosynthesis of coenzyme F420, a hydride carrier cofactor. This chain is 2-phospho-L-lactate guanylyltransferase, found in Methanosphaerula palustris (strain ATCC BAA-1556 / DSM 19958 / E1-9c).